A 266-amino-acid chain; its full sequence is Integral membrane protein 2B (266 aa).

Topologically, residues 1-54 (MVKVTFNSALAQKEAKKDEPKSGEEALIIPPDAVAVDCKDPDDVVPVGQRRAWC) are cytoplasmic. Residues 55–75 (WCMCFGLAFMLAGVILGGAYL) traverse the membrane as a helical; Signal-anchor for type II membrane protein segment. At 76-266 (YKYFALQPDD…KFAVETLICS (191 aa)) the chain is on the lumenal side. The necessary for interaction with APP and inhibitor effects on APP processing stretch occupies residues 102 to 134 (EPSADAPAALYQTIEENIKIFEEEEVEFISVPV). The BRICHOS domain occupies 137–231 (FADSDPANIV…LCHDKETYKL (95 aa)). 2 disulfide bridges follow: cysteine 164–cysteine 223 and cysteine 248–cysteine 265. An N-linked (GlcNAc...) asparagine glycan is attached at asparagine 170.

This sequence belongs to the ITM2 family. In terms of assembly, homodimer; disulfide-linked. Interacts with SPPL2A and SPPL2B. Interacts with APP. Mature BRI2 (mBRI2) interacts with the APP amyloid-beta A4 protein; the interaction occurs at the cell surface and in the endocytic compartments and enable alpha- and beta-secretase-induced APP cleavage inhibition. Mature BRI2 (mBRI2) interacts with the APP C99; the interaction occurs in the endocytic compartments and enable gamma-secretase-induced C99 cleavage inhibition. May form heterodimers with Bri23 peptide and APP amyloid-beta protein 40. Interacts with ADAM7 in sperm; the interaction increases following capacitation. In terms of processing, the ectodomain C-terminal part of the imBRI2 is processed by furin producing a secreted Bri23 peptide and a mature BRI2, membrane form (mBRI2). The remaining part of the ectodomain of mBRI2 containing the BRICHOS domain is cleaved by ADAM10 and is secreted (BRI2C, soluble form). The membrane-bound N-terminal fragment (BRI2C, membrane form) is further proteolytically processed by SPPL2A and SPPL2B through regulated intramembrane proteolysis producing a secreted C-peptide and a BRI2 intracellular domain (BRI2 ICD) released in the cytosol. Shedding by ADAM10 facilitates intramembrane cleavage but is not absolutely required for BRI2 ICD generation. Glycosylation at Asn-170 is important for cell surface localization, but doesn't affect furin- and ADAM10-induced proteolytic processing. In terms of tissue distribution, ubiquitous. Expressed in brain.

Its subcellular location is the golgi apparatus membrane. The protein resides in the cell membrane. It is found in the endosome membrane. It localises to the secreted. Functionally, plays a regulatory role in the processing of the amyloid-beta A4 precursor protein (APP) and acts as an inhibitor of the amyloid-beta peptide aggregation and fibrils deposition. Plays a role in the induction of neurite outgrowth. Functions as a protease inhibitor by blocking access of secretases to APP cleavage sites. In terms of biological role, mature BRI2 (mBRI2) functions as a modulator of the amyloid-beta A4 precursor protein (APP) processing leading to a strong reduction in the secretion of secretase-processed amyloid-beta protein 40 and amyloid-beta protein 42. Bri23 peptide prevents aggregation of APP amyloid-beta protein 42 into toxic oligomers. The polypeptide is Integral membrane protein 2B (ITM2B) (Homo sapiens (Human)).